The sequence spans 273 residues: Aliphatic sulfonates import ATP-binding protein SsuB 2 (273 aa).

An ABC transporter domain is found at 17 to 241; sequence LLDLRITRKL…PRDRRDPTLA (225 aa). 50-57 is an ATP binding site; it reads GPSGCGKS.

The protein belongs to the ABC transporter superfamily. Aliphatic sulfonates importer (TC 3.A.1.17.2) family. As to quaternary structure, the complex is composed of two ATP-binding proteins (SsuB), two transmembrane proteins (SsuC) and a solute-binding protein (SsuA).

The protein localises to the cell inner membrane. The enzyme catalyses ATP + H2O + aliphatic sulfonate-[sulfonate-binding protein]Side 1 = ADP + phosphate + aliphatic sulfonateSide 2 + [sulfonate-binding protein]Side 1.. In terms of biological role, part of the ABC transporter complex SsuABC involved in aliphatic sulfonates import. Responsible for energy coupling to the transport system. This is Aliphatic sulfonates import ATP-binding protein SsuB 2 from Burkholderia lata (strain ATCC 17760 / DSM 23089 / LMG 22485 / NCIMB 9086 / R18194 / 383).